Here is a 126-residue protein sequence, read N- to C-terminus: Profilin (126 aa).

The protein belongs to the profilin family. In terms of assembly, occurs in many kinds of cells as a complex with monomeric actin in a 1:1 ratio. As to expression, expressed in ovary and head.

The protein resides in the cytoplasm. Its subcellular location is the cytoskeleton. Binds to actin and affects the structure of the cytoskeleton. At high concentrations, profilin prevents the polymerization of actin, whereas it enhances it at low concentrations. By binding to PIP2, it may inhibit the formation of IP3 and DG. This profilin is required for intercellular cytoplasm transport during Drosophila oogenesis. Function in neurons is essential for adult survival, and is important for climbing behavior and activity. The protein is Profilin (chic) of Drosophila melanogaster (Fruit fly).